A 173-amino-acid chain; its full sequence is Nanos homolog 3 (173 aa).

The segment at 23-51 is disordered; that stretch reads KEGPETRLSPQPEPEPMLEPDQKRSLESS. The segment at 57–111 adopts a Nanos-type zinc-finger fold; it reads LCSFCKHNGESRAIYQSHVLKDEAGRVLCPILRDYVCPQCGATRERAHTRRFCPL. Zn(2+) contacts are provided by C58, C61, H74, C85, C93, C96, H104, and C109. Short sequence motifs (C2HC) lie at residues 58 to 85 and 93 to 109; these read CSFC…RVLC and CPQC…RRFC. The disordered stretch occupies residues 123 to 173; that stretch reads TTRNSAGKKLVRPDKAKTQDTGHRRGGGGGAGFRGAGKSEPSPSCSPSMST. Residues 133–145 are compositionally biased toward basic and acidic residues; it reads VRPDKAKTQDTGH. Residues 161-173 are compositionally biased toward low complexity; that stretch reads SEPSPSCSPSMST.

The protein belongs to the nanos family. As to quaternary structure, binds mRNA from germ cells. Interacts with PUM2. As to expression, ovary, testis and brain (at protein level). In the ovaries, expressed during multiple stages of oogenesis, including primordial, primary, secondary and antral follicles with the highest expression in the oocytes. In the testis, expressed in germ cells, type A spermatogonia (SA), primary spermatocytes (S1), round spermatids (S3) and elongated spermatids.

It localises to the nucleus. It is found in the cytoplasm. Its subcellular location is the stress granule. The protein localises to the P-body. In terms of biological role, plays a role in the maintenance of the undifferentiated state of germ cells regulating the spermatogonia cell cycle and inducing a prolonged transit in G1 phase. Affects cell proliferation probably by repressing translation of specific mRNAs. Maintains the germ cell lineage by suppressing both Bax-dependent and -independent apoptotic pathways. Essential in the early stage embryo to protect the migrating primordial germ cells (PGCs) from apoptosis. The protein is Nanos homolog 3 (NANOS3) of Homo sapiens (Human).